Here is a 349-residue protein sequence, read N- to C-terminus: 4-hydroxythreonine-4-phosphate dehydrogenase (349 aa).

Residues H141 and T142 each coordinate substrate. Residues H176, H221, and H276 each coordinate a divalent metal cation. Residues K284, N293, and R302 each contribute to the substrate site.

This sequence belongs to the PdxA family. Homodimer. Zn(2+) serves as cofactor. It depends on Mg(2+) as a cofactor. The cofactor is Co(2+).

It is found in the cytoplasm. It carries out the reaction 4-(phosphooxy)-L-threonine + NAD(+) = 3-amino-2-oxopropyl phosphate + CO2 + NADH. Its pathway is cofactor biosynthesis; pyridoxine 5'-phosphate biosynthesis; pyridoxine 5'-phosphate from D-erythrose 4-phosphate: step 4/5. Catalyzes the NAD(P)-dependent oxidation of 4-(phosphooxy)-L-threonine (HTP) into 2-amino-3-oxo-4-(phosphooxy)butyric acid which spontaneously decarboxylates to form 3-amino-2-oxopropyl phosphate (AHAP). This Methylorubrum extorquens (strain CM4 / NCIMB 13688) (Methylobacterium extorquens) protein is 4-hydroxythreonine-4-phosphate dehydrogenase.